Here is a 318-residue protein sequence, read N- to C-terminus: Cytochrome f (318 aa).

The signal sequence occupies residues 1-34 (MQNRNFFEYPKNWIILLIPIFTTFNLLFTSDCYA). Residues Phe35, Cys55, Cys58, and His59 each coordinate heme. The helical transmembrane segment at 284 to 303 (LQGLLVFLFLVVLAQVFLVL) threads the bilayer.

It belongs to the cytochrome f family. As to quaternary structure, the 4 large subunits of the cytochrome b6-f complex are cytochrome b6, subunit IV (17 kDa polypeptide, petD), cytochrome f and the Rieske protein, while the 4 small subunits are PetG, PetL, PetM and PetN. The complex functions as a dimer. Heme is required as a cofactor.

The protein localises to the plastid. The protein resides in the chloroplast thylakoid membrane. Component of the cytochrome b6-f complex, which mediates electron transfer between photosystem II (PSII) and photosystem I (PSI), cyclic electron flow around PSI, and state transitions. This is Cytochrome f from Chaetosphaeridium globosum (Charophycean green alga).